Consider the following 602-residue polypeptide: Proteasome-associated ATPase (602 aa).

A compositionally biased stretch (low complexity) spans 1 to 17 (MSGPRSGSGSDGSTGRP). The segment at 1–31 (MSGPRSGSGSDGSTGRPGDAESRRSAYEKET) is disordered. Basic and acidic residues predominate over residues 18 to 31 (GDAESRRSAYEKET). Residues 19–106 (DAESRRSAYE…LKEEVDRLAQ (88 aa)) adopt a coiled-coil conformation. Residue 289–294 (GCGKTL) coordinates ATP. The segment at 601 to 602 (YL) is docks into pockets in the proteasome alpha-ring.

This sequence belongs to the AAA ATPase family. In terms of assembly, homohexamer. Assembles into a hexameric ring structure that caps the 20S proteasome core. Strongly interacts with the prokaryotic ubiquitin-like protein Pup through a hydrophobic interface; the interacting region of ARC lies in its N-terminal coiled-coil domain. There is one Pup binding site per ARC hexamer ring. Upon ATP-binding, the C-terminus of ARC interacts with the alpha-rings of the proteasome core, possibly by binding to the intersubunit pockets.

It functions in the pathway protein degradation; proteasomal Pup-dependent pathway. Functionally, ATPase which is responsible for recognizing, binding, unfolding and translocation of pupylated proteins into the bacterial 20S proteasome core particle. May be essential for opening the gate of the 20S proteasome via an interaction with its C-terminus, thereby allowing substrate entry and access to the site of proteolysis. Thus, the C-termini of the proteasomal ATPase may function like a 'key in a lock' to induce gate opening and therefore regulate proteolysis. This chain is Proteasome-associated ATPase, found in Frankia casuarinae (strain DSM 45818 / CECT 9043 / HFP020203 / CcI3).